A 247-amino-acid chain; its full sequence is MSKLFWAMLSFITRLPVPRRWSQGLDFEHYSRGIITFPLIGLLLGAISGLVFMALQAWFGVPLAALFSVLVLALMTGGFHLDGLADTCDGVFSARSRDRMLEIMRDSRLGTHGGLALIFVVLAKILVLSELALRGEPILASLAAACAVSRGTAALLMYRHRYAREEGLGNVFIGKIDGRQTCVTLGLAAIFAAVLLPGMHGVAAMVVTMVAIFILGQLLKRTLGGQTGDTLGAAIELGELVFLLALL.

5 helical membrane-spanning segments follow: residues 34–54 (IITF…VFMA), 59–79 (FGVP…TGGF), 113–133 (GGLA…ELAL), 138–158 (ILAS…LLMY), and 194–214 (VLLP…AIFI).

Belongs to the CobS family. Mg(2+) is required as a cofactor.

The protein localises to the cell inner membrane. The enzyme catalyses alpha-ribazole + adenosylcob(III)inamide-GDP = adenosylcob(III)alamin + GMP + H(+). It catalyses the reaction alpha-ribazole 5'-phosphate + adenosylcob(III)inamide-GDP = adenosylcob(III)alamin 5'-phosphate + GMP + H(+). It functions in the pathway cofactor biosynthesis; adenosylcobalamin biosynthesis; adenosylcobalamin from cob(II)yrinate a,c-diamide: step 7/7. Functionally, joins adenosylcobinamide-GDP and alpha-ribazole to generate adenosylcobalamin (Ado-cobalamin). Also synthesizes adenosylcobalamin 5'-phosphate from adenosylcobinamide-GDP and alpha-ribazole 5'-phosphate. This chain is Adenosylcobinamide-GDP ribazoletransferase, found in Escherichia coli O17:K52:H18 (strain UMN026 / ExPEC).